The chain runs to 459 residues: Pentatricopeptide repeat-containing protein At1g07740, mitochondrial (459 aa).

Residues 1-20 constitute a mitochondrion transit peptide; it reads MRRRLSSVLINNQCIASQRH. Residues 19 to 41 are disordered; sequence RHYHTSRPEKPTKKASSHEPTHK. Basic and acidic residues predominate over residues 24 to 41; that stretch reads SRPEKPTKKASSHEPTHK. 10 PPR repeats span residues 80–114, 115–149, 150–184, 185–219, 220–254, 255–289, 290–324, 325–359, 360–394, and 395–429; these read DYPS…NVRC, RESL…DCVR, TIQS…RLRP, NSVS…EVQP, SVVT…RIRP, NAVT…GCKP, GLVN…RIKP, DVVI…GCKP, NAAT…RHCP, and TPAT…NLSF.

This sequence belongs to the PPR family. P subfamily.

It is found in the mitochondrion. The chain is Pentatricopeptide repeat-containing protein At1g07740, mitochondrial from Arabidopsis thaliana (Mouse-ear cress).